Reading from the N-terminus, the 127-residue chain is DNA-directed RNA polymerase subunit omega (127 aa).

It belongs to the RNA polymerase subunit omega family. In terms of assembly, the RNAP catalytic core consists of 2 alpha, 1 beta, 1 beta' and 1 omega subunit. When a sigma factor is associated with the core the holoenzyme is formed, which can initiate transcription.

It catalyses the reaction RNA(n) + a ribonucleoside 5'-triphosphate = RNA(n+1) + diphosphate. Its function is as follows. Promotes RNA polymerase assembly. Latches the N- and C-terminal regions of the beta' subunit thereby facilitating its interaction with the beta and alpha subunits. This Rickettsia rickettsii (strain Iowa) protein is DNA-directed RNA polymerase subunit omega.